Here is a 1138-residue protein sequence, read N- to C-terminus: Protein RECOGNITION OF PERONOSPORA PARASITICA 7 (1138 aa).

One can recognise an NB-ARC domain in the interval 166–422; sequence EENVKKLVGY…CNYVLSLSFE (257 aa). Residue 189-196 participates in ATP binding; that stretch reads GMGGLGKT. LRR repeat units lie at residues 544 to 565, 566 to 581, 582 to 606, 607 to 631, 655 to 680, 681 to 705, 707 to 726, 727 to 752, 754 to 774, 775 to 797, 798 to 825, 847 to 871, 873 to 893, 894 to 918, 940 to 963, 1028 to 1050, 1055 to 1078, 1079 to 1103, and 1115 to 1138; these read QYPT…SLVV, VTLG…FTRL, ELLR…IGKL, IHLR…NLKL, MQEL…NLVK, LETL…RLRT, TIEL…IGGL, KYLE…VFDF, HLKR…QHFP, SHLT…ILEK, LLQL…GFPQ, MPLL…HLPS, LTAI…LERL, VHLK…GFPQ, MPRL…GFPQ, LEKL…RMVC, FPQL…QGSM, PLLH…RFIY, and KKRL…EFDD.

Belongs to the disease resistance NB-LRR family.

Its function is as follows. Disease resistance protein required for incompatible interactions with avirulent strains of Hyaloperonospora arabidopsidis (downy mildew), isolate Hpa-Hiks1 in cv. Columbia. The protein is Protein RECOGNITION OF PERONOSPORA PARASITICA 7 of Arabidopsis thaliana (Mouse-ear cress).